Here is a 144-residue protein sequence, read N- to C-terminus: Transcriptional regulator MraZ (144 aa).

SpoVT-AbrB domains follow at residues 5–47 (EYDH…TLDE) and 76–119 (AVEV…DRET).

The protein belongs to the MraZ family. Forms oligomers.

It localises to the cytoplasm. The protein resides in the nucleoid. The protein is Transcriptional regulator MraZ of Staphylococcus aureus.